Here is a 78-residue protein sequence, read N- to C-terminus: Putative membrane protein insertion efficiency factor (78 aa).

This sequence belongs to the UPF0161 family.

The protein localises to the cell inner membrane. In terms of biological role, could be involved in insertion of integral membrane proteins into the membrane. The sequence is that of Putative membrane protein insertion efficiency factor from Thiobacillus denitrificans (strain ATCC 25259 / T1).